The chain runs to 275 residues: NH(3)-dependent NAD(+) synthetase (275 aa).

Position 50-57 (50-57 (GISGGVDS)) interacts with ATP. Aspartate 56 contacts Mg(2+). Arginine 147 serves as a coordination point for deamido-NAD(+). Position 167 (threonine 167) interacts with ATP. Glutamate 172 is a Mg(2+) binding site. Lysine 180 and aspartate 187 together coordinate deamido-NAD(+). 2 residues coordinate ATP: lysine 196 and threonine 218. 267–268 (HK) lines the deamido-NAD(+) pocket.

Belongs to the NAD synthetase family. In terms of assembly, homodimer.

The enzyme catalyses deamido-NAD(+) + NH4(+) + ATP = AMP + diphosphate + NAD(+) + H(+). It functions in the pathway cofactor biosynthesis; NAD(+) biosynthesis; NAD(+) from deamido-NAD(+) (ammonia route): step 1/1. Catalyzes the ATP-dependent amidation of deamido-NAD to form NAD. Uses ammonia as a nitrogen source. This chain is NH(3)-dependent NAD(+) synthetase, found in Pseudomonas syringae pv. tomato (strain ATCC BAA-871 / DC3000).